The following is a 512-amino-acid chain: MARAVHRSGLVALGIATALMASCAFAAKEVVVAVGSNFTTLDPYDANDTLSQAVAKSFYQGLFGLDKEMKLKNVLAESYTVSDDGLTYTVKLREGIKFQDGTDFNAAAVKANLDRASDPANHLKRYNLYKNIAKTEAIDPTTVKITLKQPFSAFINILAHPATAMISPAALEKYGKEIGFHPVGTGPYELDTWNQTDFVKVKKFAGYWQPGLPKLDSITWRPVADNNTRAAMLQTGEAQFAFPIPYEQAALLEKNKNIELMASPSIMQRYISMNVTQKPFDNPKVREALNYAINRPALVKVAFAGYATPATGVVPPSIAYAQSYKPWPYDPVKARELLKEAGYPNGFSTTLWSSHNHSTAQKVLQFTQQQLAQVGIKAQVTAMDAGQRAAEVEGKGQKESGVRMFYTGWSASTGEADWALSPLFASQNWPPTLFNTAFYSNKQVDDFLAQALKTNDPAEKTRLYKAAQDIIWQESPWIPLVVEKLVSAHSKNLTGFWIMPDTGFSFEDADLQ.

The signal sequence occupies residues 1 to 26; sequence MARAVHRSGLVALGIATALMASCAFA.

The protein belongs to the bacterial solute-binding protein 5 family. As to quaternary structure, the complex is composed of two ATP-binding proteins (GsiA), two transmembrane proteins (GsiC and GsiD) and a solute-binding protein (GsiB).

It is found in the periplasm. Functionally, part of the ABC transporter complex GsiABCD involved in glutathione import. Binds glutathione. The protein is Glutathione-binding protein GsiB of Escherichia coli O1:K1 / APEC.